A 358-amino-acid chain; its full sequence is Photosystem II protein D1 (358 aa).

3 helical membrane-spanning segments follow: residues 29–46 (YVGWFGVLMIPTLLAATI), 116–131 (HFLIGIFCWLGRQWEL), and 140–154 (WICVAYSAPVAAATS). Residue histidine 116 coordinates chlorophyll a. Tryptophan 124 provides a ligand contact to pheophytin a. The [CaMn4O5] cluster site is built by aspartate 168 and glutamate 187. Residues 195-216 (FHQLGVAGVFGGSLFCAMHGSL) traverse the membrane as a helical segment. Histidine 196 serves as a coordination point for chlorophyll a. A quinone is bound by residues histidine 213 and 262–263 (SF). Position 213 (histidine 213) interacts with Fe cation. Residue histidine 270 participates in Fe cation binding. Residues 272-286 (FLAAWPVVCIWFTAL) form a helical membrane-spanning segment. Histidine 330, glutamate 331, aspartate 340, and alanine 342 together coordinate [CaMn4O5] cluster. The propeptide occupies 343–358 (AGEVLPIALQSPAING).

The protein belongs to the reaction center PufL/M/PsbA/D family. In terms of assembly, PSII is composed of 1 copy each of membrane proteins PsbA, PsbB, PsbC, PsbD, PsbE, PsbF, PsbH, PsbI, PsbJ, PsbK, PsbL, PsbM, PsbT, PsbX, PsbY, PsbZ, Psb30/Ycf12, peripheral proteins PsbO, CyanoQ (PsbQ), PsbU, PsbV and a large number of cofactors. It forms dimeric complexes. The cofactor is The D1/D2 heterodimer binds P680, chlorophylls that are the primary electron donor of PSII, and subsequent electron acceptors. It shares a non-heme iron and each subunit binds pheophytin, quinone, additional chlorophylls, carotenoids and lipids. D1 provides most of the ligands for the Mn4-Ca-O5 cluster of the oxygen-evolving complex (OEC). There is also a Cl(-1) ion associated with D1 and D2, which is required for oxygen evolution. The PSII complex binds additional chlorophylls, carotenoids and specific lipids.. Tyr-159 forms a radical intermediate that is referred to as redox-active TyrZ, YZ or Y-Z. Post-translationally, C-terminally processed by CtpA; processing is essential to allow assembly of the oxygen-evolving complex and thus photosynthetic growth.

The protein resides in the cellular thylakoid membrane. The catalysed reaction is 2 a plastoquinone + 4 hnu + 2 H2O = 2 a plastoquinol + O2. Functionally, photosystem II (PSII) is a light-driven water:plastoquinone oxidoreductase that uses light energy to abstract electrons from H(2)O, generating O(2) and a proton gradient subsequently used for ATP formation. It consists of a core antenna complex that captures photons, and an electron transfer chain that converts photonic excitation into a charge separation. The D1/D2 (PsbA/PsbD) reaction center heterodimer binds P680, the primary electron donor of PSII as well as several subsequent electron acceptors. This chain is Photosystem II protein D1, found in Mastigocladus laminosus (Fischerella sp.).